The sequence spans 103 residues: Large ribosomal subunit protein uL23c (103 aa).

This sequence belongs to the universal ribosomal protein uL23 family. Part of the 50S ribosomal subunit.

The protein localises to the plastid. The protein resides in the chloroplast. Its function is as follows. Binds to 23S rRNA. The sequence is that of Large ribosomal subunit protein uL23c (rpl23) from Gracilaria tenuistipitata var. liui (Red alga).